The chain runs to 1012 residues: Probable inorganic carbon transporter subunit DabA (1012 aa).

Zn(2+) is bound by residues Cys489, Asp491, His679, and Cys694.

Belongs to the inorganic carbon transporter (TC 9.A.2) DabA family. In terms of assembly, forms a complex with DabB. Zn(2+) serves as cofactor.

It localises to the cell inner membrane. Functionally, part of an energy-coupled inorganic carbon pump. This is Probable inorganic carbon transporter subunit DabA from Dechloromonas aromatica (strain RCB).